The following is an 860-amino-acid chain: MSLIRVNRFGPRGGGRKTLKVKKKAAVRQEWDNTVNDLTVHRATPEDLVRRHEMHKSKNRALVHWELQEKALKRKWKKQKPETSSLEKRKLSIMKEILSDQYLTQDVLEKSDHLMAAAKGLFADVPRKRTGFPNVTRAPDSSQSHTGINQDPVTQSILNESIIEPQALNEVDDAGEQSTAHSQSEDSENELPNSLSQHSNRSTERFLHQLKEENSELINQLWTDIQQKIATQSQRTPPGSPSSELSAEDQKAALNATDAVKRIQAGPQPEEAAEPVDFSSSYLGQVLNTRKQKPLLAKVKRKQDMHAASKQKTNMLSSSTASADRPSSTGSSLDVLKHVIHEVEHEMEEYERCTGREVTGLQGGQGLTGFTLSLVSSLCRLVRYLKESEIQLRKEVETRQQLEQMLGDHRELIDALTAEILSLREENSTMQARLQQYMVTTDEQLISLTHAIKNCPVINNSRQESQAPERAAMGRRLVDNVEGPVISSNGSMPLMFRGEEVVEFPQEELPVKLSQGPTPTENLNLANNFPTHIFEPAVMLTPPRQKSNSEFSPLQDVLRRTVQTRPAPRIPPTVEVIEKEQNWEKKALPIDPDIQNSSEENRLFTQRWRVSHMGEDLENKGQPAFVSLSQPPCSSLPSTQQPRNPVLSEEPTVLGDGQQLRTSEALVQRKDIMARIAELTLQNSAIKAHLNNITSSGGEQGDGLREPRKQGSASEVSTNFPAVQSLTPSSMEERIAELNRQSMEARSKLLQLIEQQKLVGLNLSSSPVSPVESPLRAWAEEGKRTIEVSVPGMEASESSKCNTVSPVSGNSSRRSSGAISNSCSPLNATSGSGKFTPVNPRTKTEKKNEEGWFALSAHIP.

Disordered stretches follow at residues 127 to 150 (RKRTGFPNVTRAPDSSQSHTGINQ), 172 to 201 (DDAGEQSTAHSQSEDSENELPNSLSQHSNR), 230 to 250 (ATQSQRTPPGSPSSELSAEDQ), and 294 to 332 (PLLAKVKRKQDMHAASKQKTNMLSSSTASADRPSSTGSS). Polar residues-rich tracts occupy residues 139-150 (PDSSQSHTGINQ), 190-200 (ELPNSLSQHSN), and 230-245 (ATQSQRTPPGSPSSEL). The residue at position 236 (Thr236) is a Phosphothreonine. A Phosphoserine modification is found at Ser240. The span at 317–329 (SSSTASADRPSST) shows a compositional bias: low complexity. Positions 383 to 439 (RYLKESEIQLRKEVETRQQLEQMLGDHRELIDALTAEILSLREENSTMQARLQQYMV) form a coiled coil. Positions 623–645 (PAFVSLSQPPCSSLPSTQQPRNP) are disordered. Over residues 627–642 (SLSQPPCSSLPSTQQP) the composition is skewed to low complexity. A Phosphoserine modification is found at Ser648. The segment at 693-718 (ITSSGGEQGDGLREPRKQGSASEVST) is disordered. A coiled-coil region spans residues 729-757 (SSMEERIAELNRQSMEARSKLLQLIEQQK). Ser765, Ser766, Ser769, and Ser824 each carry phosphoserine. Residues 792–860 (GMEASESSKC…GWFALSAHIP (69 aa)) are disordered. The span at 804 to 824 (VSPVSGNSSRRSSGAISNSCS) shows a compositional bias: low complexity.

In terms of assembly, interacts with CEP120.

It is found in the cytoplasm. The protein resides in the cytoskeleton. It localises to the microtubule organizing center. The protein localises to the centrosome. Its subcellular location is the centriole. It is found in the spindle. Functionally, regulator required for centriole duplication, for proper bipolar spindle formation and chromosome congression in mitosis. The protein is Spindle and centriole-associated protein 1 (Spice1) of Mus musculus (Mouse).